Here is a 332-residue protein sequence, read N- to C-terminus: T-cell leukemia homeobox protein 1 (332 aa).

The homeobox DNA-binding region spans 203–262 (KKKPRTSFTRLQICELEKRFHRQKYLASAERAALAKALKMTDAQVKTWFQNRRTKWRRQT). Lys238 is modified (N6-acetyllysine).

In terms of tissue distribution, expressed in various embryonic tissues, including branchial arches, some component of the nervous system and spleen.

It localises to the nucleus. Its function is as follows. Controls the genesis of the spleen. Binds to the DNA sequence 5'-GGCGGTAAGTGG-3'. This is T-cell leukemia homeobox protein 1 (Tlx1) from Mus musculus (Mouse).